A 695-amino-acid chain; its full sequence is Elongation factor G 2 (695 aa).

The tr-type G domain occupies 5–280 (SKYRNIGIFA…AVVDYLPSPT (276 aa)). GTP is bound by residues 14–21 (AHVDAGKT), 78–82 (DTPGH), and 132–135 (NKLD).

Belongs to the TRAFAC class translation factor GTPase superfamily. Classic translation factor GTPase family. EF-G/EF-2 subfamily.

It is found in the cytoplasm. Functionally, catalyzes the GTP-dependent ribosomal translocation step during translation elongation. During this step, the ribosome changes from the pre-translocational (PRE) to the post-translocational (POST) state as the newly formed A-site-bound peptidyl-tRNA and P-site-bound deacylated tRNA move to the P and E sites, respectively. Catalyzes the coordinated movement of the two tRNA molecules, the mRNA and conformational changes in the ribosome. This is Elongation factor G 2 from Vibrio vulnificus (strain YJ016).